Reading from the N-terminus, the 290-residue chain is Acetyl-coenzyme A carboxylase carboxyl transferase subunit beta (290 aa).

Residues 27 to 290 (LWHKCPSCEA…FTHSPSPVSA (264 aa)) enclose the CoA carboxyltransferase N-terminal domain. Cys31, Cys34, Cys50, and Cys53 together coordinate Zn(2+). Residues 31 to 53 (CPSCEAVLYRPELEKTLDVCPKC) form a C4-type zinc finger.

This sequence belongs to the AccD/PCCB family. In terms of assembly, acetyl-CoA carboxylase is a heterohexamer composed of biotin carboxyl carrier protein (AccB), biotin carboxylase (AccC) and two subunits each of ACCase subunit alpha (AccA) and ACCase subunit beta (AccD). It depends on Zn(2+) as a cofactor.

The protein localises to the cytoplasm. It carries out the reaction N(6)-carboxybiotinyl-L-lysyl-[protein] + acetyl-CoA = N(6)-biotinyl-L-lysyl-[protein] + malonyl-CoA. It participates in lipid metabolism; malonyl-CoA biosynthesis; malonyl-CoA from acetyl-CoA: step 1/1. In terms of biological role, component of the acetyl coenzyme A carboxylase (ACC) complex. Biotin carboxylase (BC) catalyzes the carboxylation of biotin on its carrier protein (BCCP) and then the CO(2) group is transferred by the transcarboxylase to acetyl-CoA to form malonyl-CoA. In Pseudomonas paraeruginosa (strain DSM 24068 / PA7) (Pseudomonas aeruginosa (strain PA7)), this protein is Acetyl-coenzyme A carboxylase carboxyl transferase subunit beta.